The chain runs to 35 residues: Protein YbgU (35 aa).

This is Protein YbgU from Escherichia coli (strain K12).